A 292-amino-acid chain; its full sequence is 2-(5''-triphosphoribosyl)-3'-dephosphocoenzyme-A synthase (292 aa).

The protein belongs to the CitG/MdcB family.

It carries out the reaction 3'-dephospho-CoA + ATP = 2'-(5''-triphospho-alpha-D-ribosyl)-3'-dephospho-CoA + adenine. Its function is as follows. Catalyzes the formation of 2-(5''-triphosphoribosyl)-3'-dephosphocoenzyme-A, the precursor of the prosthetic group of the holo-acyl carrier protein (gamma chain) of citrate lyase, from ATP and dephospho-CoA. The chain is 2-(5''-triphosphoribosyl)-3'-dephosphocoenzyme-A synthase from Escherichia coli O17:K52:H18 (strain UMN026 / ExPEC).